Here is a 282-residue protein sequence, read N- to C-terminus: HTH-type transcriptional activator RhaR (282 aa).

Residues 179-277 form the HTH araC/xylS-type domain; that stretch reads DKLITALANS…GMTPSQWRHL (99 aa). 2 consecutive DNA-binding regions (H-T-H motif) follow at residues 196 to 217 and 244 to 267; these read DAFC…RAQT and ISEI…TRET.

Binds DNA as a dimer.

The protein resides in the cytoplasm. Functionally, activates expression of the rhaSR operon in response to L-rhamnose. In Salmonella dublin (strain CT_02021853), this protein is HTH-type transcriptional activator RhaR.